Here is a 396-residue protein sequence, read N- to C-terminus: Probable glucan endo-1,6-beta-glucosidase B (396 aa).

Residues 1-17 form the signal peptide; that stretch reads MIRRLAAFSALSGLATA. An N-linked (GlcNAc...) asparagine glycan is attached at N30. The Proton donor role is filled by E219. N-linked (GlcNAc...) asparagine glycosylation occurs at N272. The active-site Nucleophile is the E320.

This sequence belongs to the glycosyl hydrolase 5 (cellulase A) family.

Its subcellular location is the secreted. It catalyses the reaction Random hydrolysis of (1-&gt;6)-linkages in (1-&gt;6)-beta-D-glucans.. In terms of biological role, beta-glucanases participate in the metabolism of beta-glucan, the main structural component of the cell wall. Acts on lutean, pustulan and 1,6-oligo-beta-D-glucosides. This Aspergillus fumigatus (strain ATCC MYA-4609 / CBS 101355 / FGSC A1100 / Af293) (Neosartorya fumigata) protein is Probable glucan endo-1,6-beta-glucosidase B (exgB).